Consider the following 43-residue polypeptide: Defensin (43 aa).

Intrachain disulfides connect C3–C34, C20–C39, and C24–C41.

It belongs to the invertebrate defensin family. Type 1 subfamily.

Its subcellular location is the secreted. Functionally, antibacterial peptide. Affects Gram-positive bacteria M.luteus, B.megaterium, A.viridans, S.aureus and S.saprophyticus. Moderate activity against P.acidilactici and B.subtilis QB935. Also affects Gram-negative bacterium, D22 form of E.coli. In Pyrrhocoris apterus (Sap sucking bug), this protein is Defensin.